The chain runs to 156 residues: MAIKKIRTNDDPVLKRKAKKVTNIDDRLERLLTNMLDTMYEAEGIGLAAPQIGISKRVIVVDIGEDEIYQLINPEIVDTSDEQEKALEGCLSYPGLQGRVTRPVKVTVKALNPQEEEMIIEAEGLLARALQHEIDHLDGITFIDRAEEVFREEESH.

The Fe cation site is built by cysteine 90 and histidine 132. Glutamate 133 is a catalytic residue. Histidine 136 contacts Fe cation.

The protein belongs to the polypeptide deformylase family. The cofactor is Fe(2+).

It carries out the reaction N-terminal N-formyl-L-methionyl-[peptide] + H2O = N-terminal L-methionyl-[peptide] + formate. Its function is as follows. Removes the formyl group from the N-terminal Met of newly synthesized proteins. Requires at least a dipeptide for an efficient rate of reaction. N-terminal L-methionine is a prerequisite for activity but the enzyme has broad specificity at other positions. In Natranaerobius thermophilus (strain ATCC BAA-1301 / DSM 18059 / JW/NM-WN-LF), this protein is Peptide deformylase.